A 179-amino-acid chain; its full sequence is Isopentenyl-diphosphate Delta-isomerase (179 aa).

Positions 25 and 31 each coordinate Mn(2+). Positions 29 to 161 constitute a Nudix hydrolase domain; the sequence is ELHRAITVYI…PEQFTAWFQL (133 aa). Residue Cys66 is part of the active site. A Mg(2+)-binding site is contributed by Cys66. His68 is a Mn(2+) binding site. Glu86 is a Mg(2+) binding site. The Mn(2+) site is built by Glu111 and Glu113. The active site involves Glu113.

The protein belongs to the IPP isomerase type 1 family. Homodimer. The cofactor is Mg(2+). It depends on Mn(2+) as a cofactor.

It localises to the cytoplasm. The catalysed reaction is isopentenyl diphosphate = dimethylallyl diphosphate. The protein operates within isoprenoid biosynthesis; dimethylallyl diphosphate biosynthesis; dimethylallyl diphosphate from isopentenyl diphosphate: step 1/1. Its function is as follows. Catalyzes the 1,3-allylic rearrangement of the homoallylic substrate isopentenyl (IPP) to its highly electrophilic allylic isomer, dimethylallyl diphosphate (DMAPP). In Pectobacterium atrosepticum (strain SCRI 1043 / ATCC BAA-672) (Erwinia carotovora subsp. atroseptica), this protein is Isopentenyl-diphosphate Delta-isomerase.